The primary structure comprises 237 residues: Myelin protein zero-like protein 3 (237 aa).

Positions 1–32 (MQLARGTVGGRGCALFPLLSILVVQGARIVLS) are cleaved as a signal peptide. Positions 33-149 (LEISADAHVR…NIPLTELTVT (117 aa)) constitute an Ig-like V-type domain. Over 33-159 (LEISADAHVR…ERGFGTMLSS (127 aa)) the chain is Extracellular. A disulfide bridge connects residues cysteine 53 and cysteine 129. The N-linked (GlcNAc...) asparagine glycan is linked to asparagine 124. A helical membrane pass occupies residues 160–180 (VALLSILVFVPSAVVVILLLV). At 181-237 (RMGRKATGVQKRSRSGYKKSSIEVSDDTDQEDSNDCMTRLCVRCAECLDSDYEEEAY) the chain is on the cytoplasmic side.

It belongs to the myelin P0 protein family. Present in all tissues tested, including the skin. Present in the keratinocytes and sebocytes in the skin (at protein level).

It localises to the membrane. Mediates homophilic cell-cell adhesion. The polypeptide is Myelin protein zero-like protein 3 (Mpzl3) (Mus musculus (Mouse)).